A 410-amino-acid polypeptide reads, in one-letter code: Putative ankyrin repeat protein FPV240 (410 aa).

ANK repeat units follow at residues 33-62 (NGYSPIKMAVRLRDVEMIKLLMSYNTYPDY), 66-95 (DIESELHEAVEEGDVVKVEELLDSGKFIND), 100-129 (KGNTPLHLATISKNLDMMRLLIARGADTDV), 133-162 (DRFTPLHLAVMSKDIKGIELLLDHRACTNI), 166-195 (YGCTPLIIAMSKGDTEVCRMLLDSGANIDY), and 200-229 (PCVTAMCYAIQNNKIDMVSMFLKRGADSNI).

In Vertebrata (FPV), this protein is Putative ankyrin repeat protein FPV240.